The primary structure comprises 450 residues: Succinate-semialdehyde dehydrogenase (450 aa).

119–120 (WN) is a binding site for NADP(+). Substrate is bound at residue R128. NADP(+) is bound by residues 143–146 (KPAK) and 197–198 (GS). Catalysis depends on E219, which acts as the Proton acceptor. L220 contributes to the NADP(+) binding site. Positions 247 and 253 each coordinate substrate. C253 (nucleophile) is an active-site residue. An NADP(+)-binding site is contributed by E350. S410 contacts substrate.

Belongs to the aldehyde dehydrogenase family. Homodimer.

The enzyme catalyses succinate semialdehyde + NAD(+) + H2O = succinate + NADH + 2 H(+). The catalysed reaction is succinate semialdehyde + NADP(+) + H2O = succinate + NADPH + 2 H(+). Its pathway is alkaloid degradation; nicotine degradation. Its function is as follows. Catalyzes the NAD(P)(+)-dependent oxidation of succinate semialdehyde to succinate, which may enter the citric acid cycle. Is involved in the catabolism of 4-methylaminobutanoate produced from nicotine. Acts preferentially with NADP(+) as cosubstrate but can also use NAD(+). To a lesser extent, is active also towards butyraldehyde (8.5% of the activity observed with succinate semialdehyde) and propionaldehyde (1.6% of the activity observed with succinate semialdehyde) as substrates. This chain is Succinate-semialdehyde dehydrogenase (sad), found in Paenarthrobacter nicotinovorans (Arthrobacter nicotinovorans).